The chain runs to 987 residues: Kinesin-like protein KIN-14G (987 aa).

The Calponin-homology (CH) domain occupies 44–163; it reads SLRRYEAAGW…CILALKSYSE (120 aa). The tract at residues 201–221 is disordered; sequence ISRTQSTDMLSTDQPLSSDGD. The Kinesin motor domain maps to 394–721; sequence NIRVYCRVRP…LKFAERVGSV (328 aa). 478–485 is an ATP binding site; the sequence is GQTGSGKT. The stretch at 725-754 forms a coiled coil; the sequence is AARVNKDNSEVKELKEQIANLKMALVRKGN. Disordered stretches follow at residues 759–849 and 927–987; these read QPTA…ESKS and NIQN…SLGT. Residues 788 to 797 are compositionally biased toward polar residues; it reads MGNTSNNSRP. Over residues 840 to 849 the composition is skewed to basic and acidic residues; it reads GKDEDRESKS. Positions 964–974 are enriched in polar residues; that stretch reads PPNTVNSQPQR.

This sequence belongs to the TRAFAC class myosin-kinesin ATPase superfamily. Kinesin family. KIN-14 subfamily. In terms of assembly, monomer. As to expression, flower specific.

It is found in the cytoplasm. It localises to the cytoskeleton. Its function is as follows. Microtubule-binding motor protein. The sequence is that of Kinesin-like protein KIN-14G from Arabidopsis thaliana (Mouse-ear cress).